The chain runs to 206 residues: GTP cyclohydrolase 1 (206 aa).

The Zn(2+) site is built by Cys-95, His-98, and Cys-166.

This sequence belongs to the GTP cyclohydrolase I family. Toroid-shaped homodecamer, composed of two pentamers of five dimers.

The enzyme catalyses GTP + H2O = 7,8-dihydroneopterin 3'-triphosphate + formate + H(+). It functions in the pathway cofactor biosynthesis; 7,8-dihydroneopterin triphosphate biosynthesis; 7,8-dihydroneopterin triphosphate from GTP: step 1/1. This is GTP cyclohydrolase 1 from Bartonella henselae (strain ATCC 49882 / DSM 28221 / CCUG 30454 / Houston 1) (Rochalimaea henselae).